The sequence spans 339 residues: Transcription initiation factor IIB (339 aa).

The TFIIB-type zinc finger occupies 39 to 70; the sequence is EELICPVCGSKNIIKDYERAEIVCEMCGCVLQ. 4 residues coordinate Zn(2+): C43, C46, C62, and C65. 2 tandem repeats follow at residues 156–239 and 250–331.

This sequence belongs to the TFIIB family.

In terms of biological role, stabilizes TBP binding to an archaeal box-A promoter. Also responsible for recruiting RNA polymerase II to the pre-initiation complex (DNA-TBP-TFIIB). The chain is Transcription initiation factor IIB from Methanococcus maripaludis (strain C7 / ATCC BAA-1331).